Here is a 339-residue protein sequence, read N- to C-terminus: Uroporphyrinogen decarboxylase (339 aa).

Substrate is bound by residues 21–25, D71, Y146, S201, and H316; that span reads RQAGR.

Belongs to the uroporphyrinogen decarboxylase family. Homodimer.

The protein resides in the cytoplasm. The catalysed reaction is uroporphyrinogen III + 4 H(+) = coproporphyrinogen III + 4 CO2. The protein operates within porphyrin-containing compound metabolism; protoporphyrin-IX biosynthesis; coproporphyrinogen-III from 5-aminolevulinate: step 4/4. Catalyzes the decarboxylation of four acetate groups of uroporphyrinogen-III to yield coproporphyrinogen-III. The chain is Uroporphyrinogen decarboxylase from Rickettsia canadensis (strain McKiel).